A 641-amino-acid chain; its full sequence is Protein BCAP (641 aa).

4 coiled-coil regions span residues 83–144 (HWPV…KQND), 191–270 (EKDN…RKLE), 299–375 (QKQK…EREQ), and 487–599 (FKLE…TLNA).

It belongs to the ODF2 family.

The protein localises to the cytoplasm. Its subcellular location is the cytoskeleton. It localises to the microtubule organizing center. It is found in the centrosome. The protein resides in the centriole. The protein localises to the centriolar satellite. Its subcellular location is the cilium basal body. Acts as a suppressor of ciliogenesis, specifically, the initiation of ciliogenesis. In Xenopus laevis (African clawed frog), this protein is Protein BCAP (odf2l).